Here is a 187-residue protein sequence, read N- to C-terminus: GTP cyclohydrolase 1 (187 aa).

Zn(2+)-binding residues include Cys-76, His-79, and Cys-148.

It belongs to the GTP cyclohydrolase I family. In terms of assembly, toroid-shaped homodecamer, composed of two pentamers of five dimers.

It catalyses the reaction GTP + H2O = 7,8-dihydroneopterin 3'-triphosphate + formate + H(+). It participates in cofactor biosynthesis; 7,8-dihydroneopterin triphosphate biosynthesis; 7,8-dihydroneopterin triphosphate from GTP: step 1/1. The polypeptide is GTP cyclohydrolase 1 (Acetivibrio thermocellus (strain ATCC 27405 / DSM 1237 / JCM 9322 / NBRC 103400 / NCIMB 10682 / NRRL B-4536 / VPI 7372) (Clostridium thermocellum)).